A 65-amino-acid chain; its full sequence is Photosystem II reaction center protein J (65 aa).

The chain crosses the membrane as a helical span at residues 35 to 55; it reads LWLVATAGGIAVIFVLGIFFY.

Belongs to the PsbJ family. As to quaternary structure, PSII is composed of 1 copy each of membrane proteins PsbA, PsbB, PsbC, PsbD, PsbE, PsbF, PsbH, PsbI, PsbJ, PsbK, PsbL, PsbM, PsbT, PsbX, PsbY, Psb30/Ycf12, peripheral proteins PsbO, CyanoQ (PsbQ), PsbU, PsbV and a large number of cofactors. It forms dimeric complexes.

The protein resides in the cellular thylakoid membrane. Functionally, one of the components of the core complex of photosystem II (PSII). PSII is a light-driven water:plastoquinone oxidoreductase that uses light energy to abstract electrons from H(2)O, generating O(2) and a proton gradient subsequently used for ATP formation. It consists of a core antenna complex that captures photons, and an electron transfer chain that converts photonic excitation into a charge separation. In Prochlorococcus marinus (strain MIT 9312), this protein is Photosystem II reaction center protein J.